We begin with the raw amino-acid sequence, 471 residues long: Microtubule-associated tyrosine carboxypeptidase 1 (471 aa).

2 disordered regions span residues 1–40 and 76–116; these read MVLD…PLYP and HMRR…LRPA. Residue His-280 coordinates Zn(2+). Glu-281 (nucleophile) is an active-site residue. Zn(2+)-binding residues include His-285 and Glu-316.

This sequence belongs to the peptidase MATCAP family. Requires Zn(2+) as cofactor.

The protein resides in the cytoplasm. Its subcellular location is the cytoskeleton. The catalysed reaction is C-terminal L-alpha-aminoacyl-L-glutamyl-L-glutamyl-L-tyrosyl-[tubulin] + H2O = C-terminal L-alpha-aminoacyl-L-glutamyl-L-glutamyl-[tubulin] + L-tyrosine. It catalyses the reaction C-terminal L-alpha-aminoacyl-L-glutamyl-L-glutamyl-L-phenylalanyl-[tubulin] + H2O = C-terminal L-alpha-aminoacyl-L-glutamyl-L-glutamyl-[tubulin] + L-phenylalanine. Tyrosine carboxypeptidase that removes the C-terminal tyrosine residue of alpha-tubulin, thereby regulating microtubule dynamics and function. Also able to remove the C-terminal phenylalanine residue of alpha-tubulin TUBA8. Recognizes adjacent tubulin dimers along the same protofilament. This is Microtubule-associated tyrosine carboxypeptidase 1 from Homo sapiens (Human).